The following is a 1131-amino-acid chain: DNA polymerase II large subunit (1131 aa).

It belongs to the archaeal DNA polymerase II family. Heterodimer of a large subunit and a small subunit.

The catalysed reaction is DNA(n) + a 2'-deoxyribonucleoside 5'-triphosphate = DNA(n+1) + diphosphate. The enzyme catalyses Exonucleolytic cleavage in the 3'- to 5'-direction to yield nucleoside 5'-phosphates.. Possesses two activities: a DNA synthesis (polymerase) and an exonucleolytic activity that degrades single-stranded DNA in the 3'- to 5'-direction. Has a template-primer preference which is characteristic of a replicative DNA polymerase. The polypeptide is DNA polymerase II large subunit (Methanococcus vannielii (strain ATCC 35089 / DSM 1224 / JCM 13029 / OCM 148 / SB)).